Here is a 366-residue protein sequence, read N- to C-terminus: Carbamoyl phosphate synthase small chain (366 aa).

Positions Met1–Asp171 are CPSase. L-glutamine-binding residues include Ser47, Gly221, and Gly223. One can recognise a Glutamine amidotransferase type-1 domain in the interval Ser173–Lys360. Catalysis depends on Cys248, which acts as the Nucleophile. L-glutamine is bound by residues Leu249, Gln252, Asn290, Gly292, and Tyr293. Residues His333 and Glu335 contribute to the active site.

The protein belongs to the CarA family. As to quaternary structure, composed of two chains; the small (or glutamine) chain promotes the hydrolysis of glutamine to ammonia, which is used by the large (or ammonia) chain to synthesize carbamoyl phosphate. Tetramer of heterodimers (alpha,beta)4.

It carries out the reaction hydrogencarbonate + L-glutamine + 2 ATP + H2O = carbamoyl phosphate + L-glutamate + 2 ADP + phosphate + 2 H(+). The catalysed reaction is L-glutamine + H2O = L-glutamate + NH4(+). Its pathway is amino-acid biosynthesis; L-arginine biosynthesis; carbamoyl phosphate from bicarbonate: step 1/1. The protein operates within pyrimidine metabolism; UMP biosynthesis via de novo pathway; (S)-dihydroorotate from bicarbonate: step 1/3. In terms of biological role, small subunit of the glutamine-dependent carbamoyl phosphate synthetase (CPSase). CPSase catalyzes the formation of carbamoyl phosphate from the ammonia moiety of glutamine, carbonate, and phosphate donated by ATP, constituting the first step of 2 biosynthetic pathways, one leading to arginine and/or urea and the other to pyrimidine nucleotides. The small subunit (glutamine amidotransferase) binds and cleaves glutamine to supply the large subunit with the substrate ammonia. The protein is Carbamoyl phosphate synthase small chain of Staphylococcus haemolyticus (strain JCSC1435).